Consider the following 274-residue polypeptide: Putative 2-succinyl-6-hydroxy-2,4-cyclohexadiene-1-carboxylate synthase (274 aa).

The region spanning Ala26–Gln259 is the AB hydrolase-1 domain.

It belongs to the AB hydrolase superfamily. MenH family. As to quaternary structure, monomer.

It catalyses the reaction 5-enolpyruvoyl-6-hydroxy-2-succinyl-cyclohex-3-ene-1-carboxylate = (1R,6R)-6-hydroxy-2-succinyl-cyclohexa-2,4-diene-1-carboxylate + pyruvate. Its pathway is quinol/quinone metabolism; 1,4-dihydroxy-2-naphthoate biosynthesis; 1,4-dihydroxy-2-naphthoate from chorismate: step 3/7. It functions in the pathway quinol/quinone metabolism; menaquinone biosynthesis. Functionally, catalyzes a proton abstraction reaction that results in 2,5-elimination of pyruvate from 2-succinyl-5-enolpyruvyl-6-hydroxy-3-cyclohexene-1-carboxylate (SEPHCHC) and the formation of 2-succinyl-6-hydroxy-2,4-cyclohexadiene-1-carboxylate (SHCHC). The protein is Putative 2-succinyl-6-hydroxy-2,4-cyclohexadiene-1-carboxylate synthase of Bacillus subtilis (strain 168).